The primary structure comprises 245 residues: Zinc finger protein 575 (245 aa).

The tract at residues 1–67 (MLERGAESAA…PPQRPHRCPD (67 aa)) is disordered. A compositionally biased stretch (low complexity) spans 36 to 49 (PSQSAPGPTASAGS). Basic residues predominate over residues 52–63 (RPRRRPPPQRPH). 6 C2H2-type zinc fingers span residues 63 to 85 (HRCP…RLAH), 91 to 113 (HPCP…RLTH), 119 to 141 (HPCP…LWTH), 147 to 169 (YPCP…RHTH), 177 to 199 (YPCP…RLCH), and 213 to 240 (HRCS…QVEH).

This sequence belongs to the krueppel C2H2-type zinc-finger protein family.

The protein localises to the nucleus. Its function is as follows. May be involved in transcriptional regulation. In Homo sapiens (Human), this protein is Zinc finger protein 575 (ZNF575).